The following is an 819-amino-acid chain: DNA topoisomerase 4 subunit A (819 aa).

The Topo IIA-type catalytic domain maps to 30-496; the sequence is LPDIRDGLKP…QIIEIDTASL (467 aa). Tyr118 (O-(5'-phospho-DNA)-tyrosine intermediate) is an active-site residue.

The protein belongs to the type II topoisomerase GyrA/ParC subunit family. ParC type 2 subfamily. Heterotetramer composed of ParC and ParE.

The protein resides in the cell membrane. The catalysed reaction is ATP-dependent breakage, passage and rejoining of double-stranded DNA.. Functionally, topoisomerase IV is essential for chromosome segregation. It relaxes supercoiled DNA. Performs the decatenation events required during the replication of a circular DNA molecule. The chain is DNA topoisomerase 4 subunit A from Streptococcus pyogenes serotype M3 (strain ATCC BAA-595 / MGAS315).